The primary structure comprises 78 residues: MSRVCELTGAKANNGMAVSHSHIRTKKLQQVNLQKRRLWWEEGKKWVNIKISTKALKSVQKVGLDKFAKSNGVDLKKF.

Belongs to the bacterial ribosomal protein bL28 family.

The protein is Large ribosomal subunit protein bL28 of Prochlorococcus marinus (strain MIT 9312).